Reading from the N-terminus, the 168-residue chain is Transcriptional regulator MraZ (168 aa).

SpoVT-AbrB domains follow at residues 8-51 (EYNQ…GGDR) and 90-140 (ALNM…KADT).

The protein belongs to the MraZ family. Forms oligomers.

Its subcellular location is the cytoplasm. It is found in the nucleoid. This is Transcriptional regulator MraZ from Cereibacter sphaeroides (strain ATCC 17025 / ATH 2.4.3) (Rhodobacter sphaeroides).